The following is an 88-amino-acid chain: Small ribosomal subunit protein bS20 (88 aa).

Residues 1-22 (MANTPSAKKAVNKIAKRTQVNK) form a disordered region.

It belongs to the bacterial ribosomal protein bS20 family.

Functionally, binds directly to 16S ribosomal RNA. The chain is Small ribosomal subunit protein bS20 from Bartonella bacilliformis (strain ATCC 35685 / KC583 / Herrer 020/F12,63).